A 299-amino-acid chain; its full sequence is Probable lipid kinase YegS (299 aa).

Residues 2–133 (ANFPASLLIL…IDMAMVNDKT (132 aa)) form the DAGKc domain. ATP-binding positions include T40, 66–72 (GDGTINE), and T95. 3 residues coordinate Mg(2+): L215, D218, and L220. E271 acts as the Proton acceptor in catalysis.

Belongs to the diacylglycerol/lipid kinase family. YegS lipid kinase subfamily. Mg(2+) serves as cofactor. Requires Ca(2+) as cofactor.

Its subcellular location is the cytoplasm. Functionally, probably phosphorylates lipids; the in vivo substrate is unknown. This chain is Probable lipid kinase YegS, found in Salmonella choleraesuis (strain SC-B67).